A 156-amino-acid polypeptide reads, in one-letter code: Nucleoredoxin-like protein 2 (156 aa).

The Thioredoxin domain occupies 9-147 (HLVTCKGATV…LACFQDWVEA (139 aa)).

Belongs to the nucleoredoxin family.

In terms of biological role, may be involved in the maintenance of both the function and the viability of sensory neurons, including photoreceptors and olfactory neurons. This chain is Nucleoredoxin-like protein 2 (NXNL2), found in Homo sapiens (Human).